The chain runs to 512 residues: tRNA-2-methylthio-N(6)-dimethylallyladenosine synthase (512 aa).

Positions 23–139 constitute an MTTase N-terminal domain; it reads RTYQVRTYGC…LPTLLERARH (117 aa). 6 residues coordinate [4Fe-4S] cluster: C32, C68, C102, C176, C180, and C183. A Radical SAM core domain is found at 162-398; the sequence is RESAYAAWVS…IELQERISLE (237 aa). The TRAM domain occupies 401-469; that stretch reads REQVGRAVEL…PHHLIADAPI (69 aa). Residues 477 to 512 are disordered; sequence AGDAHAAGQKPRTGVGLGMPRIGAPAPSATAEGCGC.

Belongs to the methylthiotransferase family. MiaB subfamily. Monomer. [4Fe-4S] cluster serves as cofactor.

The protein resides in the cytoplasm. The catalysed reaction is N(6)-dimethylallyladenosine(37) in tRNA + (sulfur carrier)-SH + AH2 + 2 S-adenosyl-L-methionine = 2-methylsulfanyl-N(6)-dimethylallyladenosine(37) in tRNA + (sulfur carrier)-H + 5'-deoxyadenosine + L-methionine + A + S-adenosyl-L-homocysteine + 2 H(+). In terms of biological role, catalyzes the methylthiolation of N6-(dimethylallyl)adenosine (i(6)A), leading to the formation of 2-methylthio-N6-(dimethylallyl)adenosine (ms(2)i(6)A) at position 37 in tRNAs that read codons beginning with uridine. This Mycolicibacterium smegmatis (strain ATCC 700084 / mc(2)155) (Mycobacterium smegmatis) protein is tRNA-2-methylthio-N(6)-dimethylallyladenosine synthase.